Here is a 44-residue protein sequence, read N- to C-terminus: Antibacterial protein 2 homolog (44 aa).

It belongs to the staphylococcal hemolytic protein family.

It localises to the secreted. In terms of biological role, has hemolytic activity and also inhibits the growth of gonococci. The chain is Antibacterial protein 2 homolog from Staphylococcus haemolyticus (strain JCSC1435).